We begin with the raw amino-acid sequence, 215 residues long: Formate dehydrogenase subunit beta (215 aa).

One can recognise a 4Fe-4S ferredoxin-type 1 domain in the interval 3–32 (KGFFVDTTRCTACRGCQVACKQWHGNPATP). [4Fe-4S] cluster contacts are provided by C12, C15, C18, C22, C73, C76, C81, C121, C138, C141, C153, and C157. A 4Fe-4S ferredoxin-type 2 domain is found at 129–168 (VAESNQMAKCDMCIDRITNGLRPACVTSCPTGAMNFGDLS).

As to quaternary structure, heterodimer of alpha (FdhA) and beta (FdhB) subunits. [4Fe-4S] cluster is required as a cofactor.

The protein resides in the periplasm. Beta chain of the formate dehydrogenase (FDH) catalyzes the reversible two-electron oxidation of formate to carbon dioxide. FDH loses activity in the presence of air, but this activity can be restored. This chain is an electron transfer unit. This is Formate dehydrogenase subunit beta from Megalodesulfovibrio gigas (strain ATCC 19364 / DSM 1382 / NCIMB 9332 / VKM B-1759) (Desulfovibrio gigas).